The sequence spans 293 residues: uncharacterized protein (293 aa).

Over residues 1–10 the composition is skewed to basic residues; the sequence is MHMQLRKRKR. Residues 1–28 form a disordered region; sequence MHMQLRKRKRVDYSGRNQTSDPPSTTTA. The span at 15–28 shows a compositional bias: polar residues; it reads GRNQTSDPPSTTTA.

It localises to the nucleus. This is an uncharacterized protein from Saccharomyces cerevisiae (strain ATCC 204508 / S288c) (Baker's yeast).